The chain runs to 208 residues: Large ribosomal subunit protein uL4 (208 aa).

A disordered region spans residues 50-83; that stretch reads VKTRAEVSGGGRKPWKQKGTGRARQGSIRAPQWK.

It belongs to the universal ribosomal protein uL4 family. As to quaternary structure, part of the 50S ribosomal subunit.

Functionally, one of the primary rRNA binding proteins, this protein initially binds near the 5'-end of the 23S rRNA. It is important during the early stages of 50S assembly. It makes multiple contacts with different domains of the 23S rRNA in the assembled 50S subunit and ribosome. In terms of biological role, forms part of the polypeptide exit tunnel. This Mycoplasma mycoides subsp. mycoides SC (strain CCUG 32753 / NCTC 10114 / PG1) protein is Large ribosomal subunit protein uL4.